A 786-amino-acid chain; its full sequence is Polyribonucleotide nucleotidyltransferase (786 aa).

Mg(2+) contacts are provided by aspartate 516 and aspartate 522. Positions 582 to 641 (PRVTTVKIPVDKIGMVIGPKGQTINAIQDETGAEISIEDDGTIYVGATNGPSAQAAVERV) constitute a KH domain. The S1 motif domain occupies 653-722 (GDRFLGTVVK…QRGKIYLDKV (70 aa)). The disordered stretch occupies residues 722 to 786 (VRPEGAEGPA…SRPRRRTRHS (65 aa)). Low complexity predominate over residues 727 to 738 (AEGPAEAAATDR). Residues 739–778 (PAGRDRGDRAPRDRGDRGDRERGSRGPDRGDGGEGGGESR) show a composition bias toward basic and acidic residues.

Belongs to the polyribonucleotide nucleotidyltransferase family. The cofactor is Mg(2+).

It is found in the cytoplasm. The catalysed reaction is RNA(n+1) + phosphate = RNA(n) + a ribonucleoside 5'-diphosphate. In terms of biological role, involved in mRNA degradation. Catalyzes the phosphorolysis of single-stranded polyribonucleotides processively in the 3'- to 5'-direction. The polypeptide is Polyribonucleotide nucleotidyltransferase (Salinispora arenicola (strain CNS-205)).